Here is a 111-residue protein sequence, read N- to C-terminus: UPF0060 membrane protein XAC3064 (111 aa).

A run of 4 helical transmembrane segments spans residues 8-28, 32-52, 64-84, and 91-111; these read LLLF…PYLW, GGSV…VWLL, AAYG…VDGV, and LLGA…PRSA.

Belongs to the UPF0060 family.

Its subcellular location is the cell inner membrane. The sequence is that of UPF0060 membrane protein XAC3064 from Xanthomonas axonopodis pv. citri (strain 306).